Reading from the N-terminus, the 302-residue chain is Putative gluconeogenesis factor (302 aa).

It belongs to the gluconeogenesis factor family.

Its subcellular location is the cytoplasm. Its function is as follows. Required for morphogenesis under gluconeogenic growth conditions. The polypeptide is Putative gluconeogenesis factor (ybhK) (Salmonella typhimurium (strain LT2 / SGSC1412 / ATCC 700720)).